Reading from the N-terminus, the 568-residue chain is Urease subunit alpha (568 aa).

In terms of domain architecture, Urease spans 130–568 (GGIDTHIHFI…LPMAQRYFLF (439 aa)). Ni(2+) contacts are provided by H135, H137, and K218. K218 carries the N6-carboxylysine modification. Residue H220 participates in substrate binding. Residues H247 and H273 each coordinate Ni(2+). The active-site Proton donor is the H321. Residue D361 participates in Ni(2+) binding.

Belongs to the metallo-dependent hydrolases superfamily. Urease alpha subunit family. As to quaternary structure, heterotrimer of UreA (gamma), UreB (beta) and UreC (alpha) subunits. Three heterotrimers associate to form the active enzyme. Ni cation serves as cofactor. Carboxylation allows a single lysine to coordinate two nickel ions.

It is found in the cytoplasm. The enzyme catalyses urea + 2 H2O + H(+) = hydrogencarbonate + 2 NH4(+). It functions in the pathway nitrogen metabolism; urea degradation; CO(2) and NH(3) from urea (urease route): step 1/1. This Burkholderia mallei (strain NCTC 10247) protein is Urease subunit alpha.